The following is a 218-amino-acid chain: Protein-methionine-sulfoxide reductase heme-binding subunit MsrQ (218 aa).

Transmembrane regions (helical) follow at residues 14–34, 60–80, 86–106, 121–141, and 155–175; these read AVHA…WQVW, LLLI…AVLI, LGLY…WLDL, PYIT…ITST, and LHML…WLVK.

The protein belongs to the MsrQ family. Heterodimer of a catalytic subunit (MsrP) and a heme-binding subunit (MsrQ). Requires FMN as cofactor. Heme b serves as cofactor.

It is found in the cell inner membrane. In terms of biological role, part of the MsrPQ system that repairs oxidized periplasmic proteins containing methionine sulfoxide residues (Met-O), using respiratory chain electrons. Thus protects these proteins from oxidative-stress damage caused by reactive species of oxygen and chlorine generated by the host defense mechanisms. MsrPQ is essential for the maintenance of envelope integrity under bleach stress, rescuing a wide series of structurally unrelated periplasmic proteins from methionine oxidation. MsrQ provides electrons for reduction to the reductase catalytic subunit MsrP, using the quinone pool of the respiratory chain. This Xanthomonas campestris pv. campestris (strain 8004) protein is Protein-methionine-sulfoxide reductase heme-binding subunit MsrQ.